We begin with the raw amino-acid sequence, 792 residues long: Leucine--tRNA ligase (792 aa).

Positions 39-50 match the 'HIGH' region motif; that stretch reads PYPSAAGLHLGH. The 'KMSKS' region signature appears at 569 to 573; sequence KMSKS. ATP is bound at residue Lys-572.

Belongs to the class-I aminoacyl-tRNA synthetase family.

It is found in the cytoplasm. It catalyses the reaction tRNA(Leu) + L-leucine + ATP = L-leucyl-tRNA(Leu) + AMP + diphosphate. This Mycoplasma genitalium (strain ATCC 33530 / DSM 19775 / NCTC 10195 / G37) (Mycoplasmoides genitalium) protein is Leucine--tRNA ligase.